A 422-amino-acid chain; its full sequence is MAASSTRLRCLYASSAPAWKKSPSQSIISLSRHYATTSSTTPSLNPDESSSSSSSTIPKRRKTTTFRDKLNAGPSFADFVTGGNGNNASLDPEEAYALEKVMIPGPAGRKKEHTRLPSWLKTPIPDSTNYKRIKKDLRGLDLHTVCEEARCPNISDCWGGSDKSAATATIMLMGDTCTRGCRFCSVKTLRTPGPLDPHEPENTAEALSRWGLGDDLPDGGAHHFAETVIKIKQKAPGILVECLTGDFAGDLDMVSLVAKSGLDVYAHNVETVEALTPHVRDRRATFKQSLRVLEAAKRAKPSLITKTSMMLGFGETEDQLWDALRQLRASNVDVVTFGQYMRPTKRHMAVHEYVTPDKFELWRQRALEMGFLYVASGPLVRSSYKAGEAFIENVLKKRRGVGNTPGAEVASAKDVPVDVLGK.

Residues 1 to 34 (MAASSTRLRCLYASSAPAWKKSPSQSIISLSRHY) constitute a mitochondrion transit peptide. Positions 37-48 (TSSTTPSLNPDE) are enriched in polar residues. The tract at residues 37-70 (TSSTTPSLNPDESSSSSSSTIPKRRKTTTFRDKL) is disordered. Residues cysteine 146, cysteine 151, cysteine 157, cysteine 177, cysteine 181, cysteine 184, and serine 383 each coordinate [4Fe-4S] cluster. The Radical SAM core domain occupies 160-372 (GSDKSAATAT…RQRALEMGFL (213 aa)).

Belongs to the radical SAM superfamily. Lipoyl synthase family. Requires [4Fe-4S] cluster as cofactor.

The protein localises to the mitochondrion. The enzyme catalyses [[Fe-S] cluster scaffold protein carrying a second [4Fe-4S](2+) cluster] + N(6)-octanoyl-L-lysyl-[protein] + 2 oxidized [2Fe-2S]-[ferredoxin] + 2 S-adenosyl-L-methionine + 4 H(+) = [[Fe-S] cluster scaffold protein] + N(6)-[(R)-dihydrolipoyl]-L-lysyl-[protein] + 4 Fe(3+) + 2 hydrogen sulfide + 2 5'-deoxyadenosine + 2 L-methionine + 2 reduced [2Fe-2S]-[ferredoxin]. It participates in protein modification; protein lipoylation via endogenous pathway; protein N(6)-(lipoyl)lysine from octanoyl-[acyl-carrier-protein]: step 2/2. Functionally, catalyzes the radical-mediated insertion of two sulfur atoms into the C-6 and C-8 positions of the octanoyl moiety bound to the lipoyl domains of lipoate-dependent enzymes, thereby converting the octanoylated domains into lipoylated derivatives. This chain is Lipoyl synthase, mitochondrial, found in Talaromyces stipitatus (strain ATCC 10500 / CBS 375.48 / QM 6759 / NRRL 1006) (Penicillium stipitatum).